We begin with the raw amino-acid sequence, 73 residues long: UPF0352 protein HSM_0097 (73 aa).

It belongs to the UPF0352 family.

This chain is UPF0352 protein HSM_0097, found in Histophilus somni (strain 2336) (Haemophilus somnus).